Consider the following 543-residue polypeptide: MARYIFITGGVVSSLGKGLASAALGALLQARGYKVRLRKLDPYLNLDPGTMSPYQHGEVFVTDDGAETDLDLGHYERFTGRPATKQDNITTGRIYQDILTKERRGDYLGATIQVVPHVTNAIKEFIVSDNDGYDFVLVEIGGTVGDIEGLPFFEAIRQIKNDLPRGDVIYIHLTLLPYIPSAGELKTKPTQHSVKELRSIGIQPDILLCRTDRPIPKEERRKLGLFCNVRESAVIEARDADSIYAVPEAYHAAGLDDEVLAAFAIAAKEPPQLGRWHEINERIRNPEGAVTIAIVGKYTGMKDAYKSLIEALSHGGIANKVQVKLDWIESEVFENEDPAPFLEHVNGILVPGGFGQRGAEGKIEAARFARERNVPYFGICFGMQMAVIEAARNLAGIEQANSTEFGPTPEPLVGLMTEWVRGNELEKRSQAGDLGGTMRLGAYPATLKRGSRVSQVYGGVTEISERHRHRYEVNTAYKDRLEQHGLKFSGMSPDGVLPEIVEYEDHPWFIGVQFHPELKSRPFDPHPLFASFVQAALVQSRLV.

Residues 1 to 265 (MARYIFITGG…DDEVLAAFAI (265 aa)) are amidoligase domain. CTP is bound at residue serine 13. Serine 13 lines the UTP pocket. Position 14–19 (14–19 (SLGKGL)) interacts with ATP. Residue tyrosine 54 coordinates L-glutamine. Position 71 (aspartate 71) interacts with ATP. Positions 71 and 139 each coordinate Mg(2+). Residues 146-148 (DIE), 186-191 (KTKPTQ), and lysine 222 each bind CTP. UTP contacts are provided by residues 186–191 (KTKPTQ) and lysine 222. 238 to 240 (RDA) serves as a coordination point for ATP. The 252-residue stretch at 291–542 (TIAIVGKYTG…VQAALVQSRL (252 aa)) folds into the Glutamine amidotransferase type-1 domain. Glycine 353 is a binding site for L-glutamine. The active-site Nucleophile; for glutamine hydrolysis is cysteine 380. Residues 381–384 (FGMQ), glutamate 404, and arginine 470 contribute to the L-glutamine site. Active-site residues include histidine 515 and glutamate 517.

The protein belongs to the CTP synthase family. Homotetramer.

It catalyses the reaction UTP + L-glutamine + ATP + H2O = CTP + L-glutamate + ADP + phosphate + 2 H(+). It carries out the reaction L-glutamine + H2O = L-glutamate + NH4(+). The catalysed reaction is UTP + NH4(+) + ATP = CTP + ADP + phosphate + 2 H(+). The protein operates within pyrimidine metabolism; CTP biosynthesis via de novo pathway; CTP from UDP: step 2/2. Allosterically activated by GTP, when glutamine is the substrate; GTP has no effect on the reaction when ammonia is the substrate. The allosteric effector GTP functions by stabilizing the protein conformation that binds the tetrahedral intermediate(s) formed during glutamine hydrolysis. Inhibited by the product CTP, via allosteric rather than competitive inhibition. Catalyzes the ATP-dependent amination of UTP to CTP with either L-glutamine or ammonia as the source of nitrogen. Regulates intracellular CTP levels through interactions with the four ribonucleotide triphosphates. The polypeptide is CTP synthase (Rhodopseudomonas palustris (strain ATCC BAA-98 / CGA009)).